Here is a 99-residue protein sequence, read N- to C-terminus: Cell division protein FtsB (99 aa).

The Cytoplasmic segment spans residues 1–3 (MKF). Residues 4 to 21 (FVIALIVLLGLLQYRLWS) form a helical membrane-spanning segment. Residues 22 to 99 (GDNSLPEYFV…GDRSVSSPSQ (78 aa)) are Periplasmic-facing. A coiled-coil region spans residues 31 to 73 (VLQKQIAAQQDGNAKLNERNQVLKEEIIDLKSGTEAIEERARN).

It belongs to the FtsB family. Part of a complex composed of FtsB, FtsL and FtsQ.

It is found in the cell inner membrane. Functionally, essential cell division protein. May link together the upstream cell division proteins, which are predominantly cytoplasmic, with the downstream cell division proteins, which are predominantly periplasmic. The chain is Cell division protein FtsB from Shewanella sp. (strain MR-4).